Consider the following 835-residue polypeptide: Leucine--tRNA ligase (835 aa).

A 'HIGH' region motif is present at residues 42 to 52 (PYPSGRIHMGH). The 'KMSKS' region motif lies at 612-616 (KMSKS). Lys615 contributes to the ATP binding site.

It belongs to the class-I aminoacyl-tRNA synthetase family.

The protein resides in the cytoplasm. It catalyses the reaction tRNA(Leu) + L-leucine + ATP = L-leucyl-tRNA(Leu) + AMP + diphosphate. The chain is Leucine--tRNA ligase from Rhizorhabdus wittichii (strain DSM 6014 / CCUG 31198 / JCM 15750 / NBRC 105917 / EY 4224 / RW1) (Sphingomonas wittichii).